Here is a 591-residue protein sequence, read N- to C-terminus: L-fucose isomerase (591 aa).

Catalysis depends on proton acceptor residues E337 and D361. Mn(2+)-binding residues include E337, D361, and H528.

Belongs to the L-fucose isomerase family. In terms of assembly, homohexamer. Requires Mn(2+) as cofactor.

The protein localises to the cytoplasm. It catalyses the reaction L-fucose = L-fuculose. It participates in carbohydrate degradation; L-fucose degradation; L-lactaldehyde and glycerone phosphate from L-fucose: step 1/3. In terms of biological role, converts the aldose L-fucose into the corresponding ketose L-fuculose. The sequence is that of L-fucose isomerase from Salmonella schwarzengrund (strain CVM19633).